The following is a 1779-amino-acid chain: 6-methylsalicylic acid synthase (1779 aa).

Residues 1–11 are compositionally biased toward polar residues; the sequence is MSASRSSTKFS. A disordered region spans residues 1–40; the sequence is MSASRSSTKFSTPAEGSDNGKEFTTPATSTEGHEVPDRPG. Over residues 31–40 the composition is skewed to basic and acidic residues; sequence EGHEVPDRPG. The Ketosynthase family 3 (KS3) domain maps to 43-472; sequence LADVAIIGMA…GTVSHAVLEA (430 aa). Active-site for beta-ketoacyl synthase activity residues include C215, H350, and H392. A malonyl-CoA:ACP transacylase (MAT) domain region spans residues 586–883; sequence WIFSGHGAQW…TPTMVRRQPA (298 aa). Catalysis depends on S672, which acts as the For acyl/malonyl transferase activity. The segment at 942 to 1218 is product template (PT) domain; sequence THDPAANNLL…SFAGLEGESF (277 aa). Positions 948–1064 are N-terminal hotdog fold; it reads NNLLGKRIAL…AAVGAANVVP (117 aa). The PKS/mFAS DH domain maps to 948-1219; sequence NNLLGKRIAL…FAGLEGESFS (272 aa). H980 serves as the catalytic Proton acceptor; for dehydratase activity. The tract at residues 1079–1219 is C-terminal hotdog fold; it reads PQKLADSFSI…FAGLEGESFS (141 aa). The active-site Proton donor; for dehydratase activity is D1138. The 75-residue stretch at 1703–1777 folds into the Carrier domain; that stretch reads QHLRDVINGC…HLVKHFTKEL (75 aa). The residue at position 1737 (S1737) is an O-(pantetheine 4'-phosphoryl)serine.

It carries out the reaction 3 malonyl-CoA + acetyl-CoA + NADPH + 3 H(+) = 6-methylsalicylate + 3 CO2 + NADP(+) + 4 CoA + H2O. It participates in secondary metabolite biosynthesis; terpenoid biosynthesis. Functionally, non-reducing polyketide synthase; part of the gene cluster that mediates the biosynthesis of yanuthone D, a fungal isoprenoid epoxycyclohexenone that acts as an antibiotic against fungi and bacteria. The first step of the pathway is the synthesis of 6-methylsalicylic acid (6-MSA) by the polyketide synthase yanA. 6-MSA is then converted to m-cresol by the decarboxylase yanB. The cytochrome P450 monooxygenase yanC then catalyzes the oxidation of m-cresol to toluquinol. Epoxidation of toluquinol is then performed by the short chain dehydrogenase yanD, with the help of yanE, and a further prenylation by yanG leads to 7-deacetoxyyanuthone A. The next step is the hydroxylation of C-22 of 7-deacetoxyyanuthone A by the cytochrome P450 monooxygenase yanH to yield 22-deacetylyanuthone A. O-Mevalon transferase yanI then attaches mevalon to the hydroxyl group of 22-deacetylyanuthone A to produce yanuthone E. Finally, the FAD-dependent monooxygenase yanF oxidizes the hydroxyl group at C15 of yanuthone E to form yanuthone D. Furthermore, several branching points in the pathway lead to the production of yanuthones F and G from 7-deacetoxyyanuthone A; yanuthones H and I from 22-deacetylyanuthone A; and yanuthone J from yanuthone E. The polypeptide is 6-methylsalicylic acid synthase (Aspergillus niger (strain ATCC 1015 / CBS 113.46 / FGSC A1144 / LSHB Ac4 / NCTC 3858a / NRRL 328 / USDA 3528.7)).